Consider the following 156-residue polypeptide: Type IV major fimbrial protein FimA (156 aa).

Positions 1-7 are cleaved as a propeptide — leader sequence; it reads MKSLQKG. Phe-8 bears the N-methylphenylalanine mark. A helical transmembrane segment spans residues 8–28; sequence FTLIELMIVVAIIGILAAIAI. 2 disulfide bridges follow: Cys-57–Cys-67 and Cys-141–Cys-154.

Belongs to the N-Me-Phe pilin family. In terms of assembly, the pili are polar flexible filaments of about 5.4 nanometers diameter and 2.5 micrometers average length; they consist of only a single polypeptide chain arranged in a helical configuration of five subunits per turn in the assembled pilus.

It localises to the fimbrium. It is found in the membrane. In terms of biological role, major component of the type IV fimbriae that plays an essential role in twitching motility, natural transformation, and protease secretion. The sequence is that of Type IV major fimbrial protein FimA (fimA) from Dichelobacter nodosus (Bacteroides nodosus).